The primary structure comprises 438 residues: Alpha-methylserine aldolase (438 aa).

K252 is modified (N6-(pyridoxal phosphate)lysine).

It belongs to the SHMT family. Alpha-methylserine aldolase subfamily. In terms of assembly, homodimer. Requires pyridoxal 5'-phosphate as cofactor.

The catalysed reaction is 2-methyl-L-serine = formaldehyde + L-alanine. In the alpha-methyl-L-serine synthesis reaction, activity is inhibited by an excess amount of formaldehyde (at a concentration greater than 10 mM). Catalyzes the reversible interconversion of alpha-methyl-L-serine to L-alanine and formaldehyde. Cannot use alpha-methyl-D-serine, L-serine or D-serine. Cannot use D-alanine instead of L-alanine as the substrate for alpha-methyl-L-serine synthesis. Does not require tetrahydrofolate (THF) for activity. The chain is Alpha-methylserine aldolase from Ralstonia sp.